The chain runs to 75 residues: Rugosin-LK1 (75 aa).

A signal peptide spans 1–22 (MFTMKKSLLFLFFLGTISLSFC). Positions 23-40 (EEERSADEDDEGEMTEEE) are excised as a propeptide.

As to expression, expressed by the skin glands.

The protein localises to the secreted. Its function is as follows. Has antimicrobial activity against Gram-positive bacteria S.aureus ATCC 2592 (MIC=10.0 uM), S.aureus ATCC 43300 (MIC=15.0 uM) and B.subtilis (MIC=40.0 uM), against Gram-negative bacteria E.coli ML-35P (MIC=10.0 uM), P.aeruginosa PA01 (MIC=5.0 uM) and P.aeruginosa ATCC 27853 (MIC=5.0 uM) and against fungus C.albicans ATCC 2002 (MIC=10.0 uM). This is Rugosin-LK1 from Limnonectes kuhlii (Kuhl's Creek frog).